Consider the following 122-residue polypeptide: Large ribosomal subunit protein uL29B (122 aa).

Positions 10-69 form a coiled coil; it reads QLGIKQIEERAAEIKAELAALRQKKNSGDVGANDIKTAKKNLARALTVRREKILEELVEA.

It belongs to the universal ribosomal protein uL29 family. Component of the large ribosomal subunit.

The protein resides in the cytoplasm. The polypeptide is Large ribosomal subunit protein uL29B (RPL35C) (Encephalitozoon cuniculi (strain GB-M1) (Microsporidian parasite)).